A 409-amino-acid chain; its full sequence is uncharacterized protein (409 aa).

Residues Met-1–Ser-209 enclose the EAL domain. The region spanning Leu-203–Tyr-392 is the HDOD domain.

This is an uncharacterized protein from Bacillus subtilis (strain 168).